A 163-amino-acid chain; its full sequence is F-box protein At2g35280 (163 aa).

Positions 8-57 (ISRLEALPQDLLREIVAKIGVKSAEDYHNCILSCKELGASANDERVLKTL) constitute an F-box domain.

This Arabidopsis thaliana (Mouse-ear cress) protein is F-box protein At2g35280.